Reading from the N-terminus, the 322-residue chain is MGAPTERLVDTNGVRLRVVEAGEPGAPVVILAHGFPELAYSWRHQIPALADAGYHVLAPDQRGYGGSSRPEAIEAYDIHRLTADLVGLLDDVGAERAVWVGHDWGAVVVWNAPLLHADRVAAVAALSVPALPRAQVPPTQAFRSRFGENFFYILYFQEPGIADAELNGDPARTMRRMIGGLRPPGDQSAAMRMLAPGPDGFIDRLPEPAGLPAWISQEELDHYIGEFTRTGFTGGLNWYRNFDRNWETTADLAGKTISVPSLFIAGTADPVLTFTRTDRAAEVISGPYREVLIDGAGHWLQQERPGEVTAALLEFLTGLELR.

An AB hydrolase-1 domain is found at 27–131; it reads PVVILAHGFP…AVAALSVPAL (105 aa). Residue D103 is the Nucleophile of the active site. The active-site Proton acceptor is H298.

This sequence belongs to the AB hydrolase superfamily. Epoxide hydrolase family. Homodimer.

It catalyses the reaction an epoxide + H2O = an ethanediol. Its function is as follows. Could be involved in detoxification of extraneous host-cell epoxides. Catalyzes the hydrolysis of epoxide-containing substrates. This is Epoxide hydrolase A (ephA) from Mycobacterium tuberculosis (strain ATCC 25618 / H37Rv).